A 929-amino-acid polypeptide reads, in one-letter code: DNA mismatch repair protein MutS (929 aa).

The segment at 22-46 is disordered; it reads PAAPRSTGSAAAPPPSPAVLDDRSG. The segment covering 23–32 has biased composition (low complexity); the sequence is AAPRSTGSAA. ATP is bound at residue 678–685; that stretch reads GPNMAGKS.

It belongs to the DNA mismatch repair MutS family.

Its function is as follows. This protein is involved in the repair of mismatches in DNA. It is possible that it carries out the mismatch recognition step. This protein has a weak ATPase activity. This Rhodospirillum rubrum (strain ATCC 11170 / ATH 1.1.1 / DSM 467 / LMG 4362 / NCIMB 8255 / S1) protein is DNA mismatch repair protein MutS.